A 611-amino-acid chain; its full sequence is Lanthanide-dependent methanol dehydrogenase (611 aa).

The N-terminal stretch at 1 to 34 is a signal peptide; it reads MTVKLKKPKKYAVAKNATLLAAFGLIGSLSLAKA. A disulfide bridge links Cys138 with Cys139. 5 residues coordinate pyrroloquinoline quinone: Arg144, Thr188, Ser203, Gly204, and Gly205. Residue Glu206 coordinates Ce(3+). Glu206 is a binding site for Eu(3+). The pyrroloquinoline quinone site is built by Thr270 and Trp272. Ce(3+) contacts are provided by Asn290, Asp333, and Asp335. 3 residues coordinate Eu(3+): Asn290, Asp333, and Asp335. Arg360 contacts pyrroloquinoline quinone. Residues Cys414 and Cys443 are joined by a disulfide bond. Trp501 and Trp566 together coordinate pyrroloquinoline quinone.

It belongs to the bacterial PQQ dehydrogenase family. In terms of assembly, homodimer. It depends on Ce(3+) as a cofactor. Requires La(3+) as cofactor. The cofactor is Nd(3+). Pr(3+) serves as cofactor. Eu(3+) is required as a cofactor. It depends on pyrroloquinoline quinone as a cofactor.

The protein resides in the periplasm. The catalysed reaction is 2 Fe(III)-[cytochrome cL] + methanol = 2 Fe(II)-[cytochrome cL] + formaldehyde + 2 H(+). It catalyses the reaction 4 Fe(III)-[cytochrome cL] + methanol + H2O = 4 Fe(II)-[cytochrome cL] + formate + 5 H(+). The enzyme catalyses 2 Fe(III)-[cytochrome cL] + a primary alcohol = 2 Fe(II)-[cytochrome cL] + an aldehyde + 2 H(+). Its pathway is one-carbon metabolism; methanol degradation. Catalyzes the oxidation of methanol to formaldehyde or formate in the presence of lanthanides (Ln). Is a key enzyme in methane/methanol metabolism, allowing M.fumariolicum to grow on methane as the sole carbon and energy source. Can also act on other primary alcohols in vitro, such as ethanol, 1-propanol, 1-butanol, and 1-hexanol, but is not able to oxidize secondary alcohols and acetaldehyde. Uses a specific cytochrome cL, encoded by the adjacent gene in the locus, as electron acceptor. The sequence is that of Lanthanide-dependent methanol dehydrogenase from Methylacidiphilum fumariolicum (strain SolV).